A 193-amino-acid chain; its full sequence is ECF RNA polymerase sigma factor SigK (193 aa).

The interval 35–101 (LYDRTRSRVY…RRAVDRVRSE (67 aa)) is sigma-70 factor domain-2. Positions 59-62 (ETTQ) match the Polymerase core binding motif. The sigma-70 factor domain-4 stretch occupies residues 140-187 (MGSLSDLQREAIQLAYYEGLTYVQVSERLSANLATIKSRMRDGIRGLK). A DNA-binding region (H-T-H motif) is located at residues 161–180 (YVQVSERLSANLATIKSRMR).

The protein belongs to the sigma-70 factor family. ECF subfamily. Interacts transiently with the RNA polymerase catalytic core formed by RpoA, RpoB, RpoC and RpoZ (2 alpha, 1 beta, 1 beta' and 1 omega subunit) to form the RNA polymerase holoenzyme that can initiate transcription. Interacts (via sigma-70 factor domain 4) with anti-sigma-K factor RskA.

Sigma factors are initiation factors that promote the attachment of RNA polymerase to specific initiation sites and are then released. Extracytoplasmic function (ECF) sigma factors are held in an inactive form by an anti-sigma factor until released by regulated intramembrane proteolysis. The chain is ECF RNA polymerase sigma factor SigK (sigK) from Mycobacterium sp. (strain JLS).